We begin with the raw amino-acid sequence, 581 residues long: Sulfate adenylyltransferase (581 aa).

Positions 1–176 (MANAPHGGVL…VQAIQAPTHF (176 aa)) are N-terminal. The interval 177 to 401 (DYVPLRYTPA…LRESYPPRPQ (225 aa)) is catalytic. Position 204 (Gln204) interacts with sulfate. Residues 204–207 (QTRN) and 298–301 (GRDH) each bind ATP. Active-site residues include Thr205, Arg206, and Asn207. Arg206 provides a ligand contact to sulfate. Ala302 contributes to the sulfate binding site. Met340 provides a ligand contact to ATP. The tract at residues 402–581 (QGFTILLTGL…IMILESQNLV (180 aa)) is allosteric regulation domain; adenylyl-sulfate kinase-like. 3'-phosphoadenylyl sulfate-binding positions include 441–444 (EELR), 486–487 (TA), and Arg526.

This sequence in the N-terminal section; belongs to the sulfate adenylyltransferase family. The protein in the C-terminal section; belongs to the APS kinase family. As to quaternary structure, homohexamer. Dimer of trimers.

The protein localises to the cytoplasm. It catalyses the reaction sulfate + ATP + H(+) = adenosine 5'-phosphosulfate + diphosphate. The protein operates within sulfur metabolism; hydrogen sulfide biosynthesis; sulfite from sulfate: step 1/3. With respect to regulation, allosterically inhibited by 3'-phosphoadenosine 5'-phosphosulfate (PAPS). Functionally, catalyzes the first intracellular reaction of sulfate assimilation, forming adenosine-5'-phosphosulfate (APS) from inorganic sulfate and ATP. Plays an important role in sulfate activation as a component of the biosynthesis pathway of sulfur-containing amino acids. This Cryptococcus neoformans var. grubii serotype A (strain H99 / ATCC 208821 / CBS 10515 / FGSC 9487) (Filobasidiella neoformans var. grubii) protein is Sulfate adenylyltransferase.